We begin with the raw amino-acid sequence, 143 residues long: Transcription antitermination protein NusB (143 aa).

This sequence belongs to the NusB family.

Functionally, involved in transcription antitermination. Required for transcription of ribosomal RNA (rRNA) genes. Binds specifically to the boxA antiterminator sequence of the ribosomal RNA (rrn) operons. This chain is Transcription antitermination protein NusB, found in Mannheimia succiniciproducens (strain KCTC 0769BP / MBEL55E).